The primary structure comprises 466 residues: Asparagine--tRNA ligase (466 aa).

It belongs to the class-II aminoacyl-tRNA synthetase family. As to quaternary structure, homodimer.

It is found in the cytoplasm. The enzyme catalyses tRNA(Asn) + L-asparagine + ATP = L-asparaginyl-tRNA(Asn) + AMP + diphosphate + H(+). This chain is Asparagine--tRNA ligase, found in Shewanella baltica (strain OS195).